A 420-amino-acid chain; its full sequence is Nucleobindin-2 (420 aa).

The first 24 residues, 1-24, serve as a signal peptide directing secretion; that stretch reads MRWRTILLQYCFLLITCLLTALEA. A DNA-binding region spans residues 171–223; it reads KTRHEEFKKYEMMKEHERREYLKTLNEEKRKEEESKFEEMKKKHENHPKVNHP. Positions 195–212 are enriched in basic and acidic residues; sequence LNEEKRKEEESKFEEMKK. Residues 195 to 225 form a disordered region; that stretch reads LNEEKRKEEESKFEEMKKKHENHPKVNHPGS. Residues 213 to 420 form a binds to necdin region; it reads KHENHPKVNH…AGELKFEPHI (208 aa). 2 EF-hand domains span residues 241–276 and 293–328; these read PNDFDPKTFFKLHDVNSDGFLDEQELEALFTKELEK and ERLRMREHVMNEVDTNKDRLVTLEEFLKATEKKEFL. 2 residues coordinate Ca(2+): Asp-254 and Asn-256. Ser-257 bears the Phosphoserine mark. Ca(2+) contacts are provided by Asp-258, Glu-265, Asp-306, Asn-308, Asp-310, and Glu-317. The GBA signature appears at 304-334; that stretch reads EVDTNKDRLVTLEEFLKATEKKEFLEPDSWE. A Phosphoserine modification is found at Ser-332. The interval 398-420 is disordered; sequence QKKLQQGIPPSGPAGELKFEPHI.

Belongs to the nucleobindin family. Interacts (via GBA motif) with guanine nucleotide-binding protein G(i) alpha subunit GNAI3. Preferentially interacts with inactive rather than active GNAI3. Interaction with GNAI3 is inhibited when NUCB2 binds calcium, probably due to a conformational change which renders the GBA motif inaccessible. Binds to the postmitotic growth suppressor NDN; coexpression abolishes NUCB2 secretion. Interacts with MC4R. Predominantly expressed in spleen, testis and normal stomach.

It is found in the golgi apparatus. The protein resides in the membrane. Its subcellular location is the cytoplasm. It localises to the secreted. The protein localises to the endoplasmic reticulum. It is found in the nucleus envelope. Functionally, calcium-binding protein which may have a role in calcium homeostasis. Acts as a non-receptor guanine nucleotide exchange factor which binds to and activates guanine nucleotide-binding protein (G-protein) alpha subunit GNAI3. In terms of biological role, anorexigenic peptide, seems to play an important role in hypothalamic pathways regulating food intake and energy homeostasis, acting in a leptin-independent manner. May also exert hypertensive roles and modulate blood pressure through directly acting on peripheral arterial resistance. In intestinal epithelial cells, plays a role in the inhibition of hepatic glucose production via MC4R receptor leading to increased cyclic adenosine monophosphate (cAMP) levels and glucagon-like peptide 1 (GLP-1) secretion. In Homo sapiens (Human), this protein is Nucleobindin-2.